The chain runs to 276 residues: Large ribosomal subunit protein uL2 (276 aa).

Disordered stretches follow at residues 1–20 (MGIK…TTND) and 219–276 (TVRG…RRKK). Positions 7-20 (NPTTNGRRNMTTND) are enriched in polar residues.

It belongs to the universal ribosomal protein uL2 family. In terms of assembly, part of the 50S ribosomal subunit. Forms a bridge to the 30S subunit in the 70S ribosome.

In terms of biological role, one of the primary rRNA binding proteins. Required for association of the 30S and 50S subunits to form the 70S ribosome, for tRNA binding and peptide bond formation. It has been suggested to have peptidyltransferase activity; this is somewhat controversial. Makes several contacts with the 16S rRNA in the 70S ribosome. This chain is Large ribosomal subunit protein uL2, found in Bacillus anthracis (strain A0248).